An 86-amino-acid polypeptide reads, in one-letter code: Weak toxin 2 (86 aa).

Residues 1 to 23 (MKTLLLTLVVVAIVCLDLGYTLT) form the signal peptide. 5 disulfide bridges follow: Cys-24/Cys-45, Cys-27/Cys-32, Cys-38/Cys-63, Cys-67/Cys-78, and Cys-79/Cys-84.

This sequence belongs to the three-finger toxin family. Ancestral subfamily. Orphan group II sub-subfamily. As to expression, expressed by the venom gland.

Its subcellular location is the secreted. In terms of biological role, binds with low affinity to muscular (alpha-1-beta-1-delta-epsilon/CHRNA1-CHRNB1-CHRND-CHRNE) and very low affinity to neuronal (alpha-7/CHRNA7) nicotinic acetylcholine receptor (nAChR). The chain is Weak toxin 2 from Bungarus candidus (Malayan krait).